Reading from the N-terminus, the 1374-residue chain is L-2-aminoadipate reductase large subunit (1374 aa).

The 78-residue stretch at 828 to 905 folds into the Carrier domain; the sequence is SEFNQQEREI…AFAAEVSRLK (78 aa). Serine 865 bears the O-(pantetheine 4'-phosphoryl)serine mark.

It belongs to the ATP-dependent AMP-binding enzyme family. As to quaternary structure, heterodimer of an alpha and a beta subunit. Requires pantetheine 4'-phosphate as cofactor.

It carries out the reaction (S)-2-amino-6-oxohexanoate + NADP(+) + H2O = L-2-aminoadipate + NADPH + 2 H(+). It catalyses the reaction (S)-2-amino-6-oxohexanoate + NAD(+) + H2O = L-2-aminoadipate + NADH + 2 H(+). The enzyme catalyses (S)-2-amino-6-oxohexanoate + AMP + diphosphate + NADP(+) = L-2-aminoadipate + ATP + NADPH + H(+). Its pathway is amino-acid biosynthesis; L-lysine biosynthesis via AAA pathway; L-lysine from L-alpha-aminoadipate (fungal route): step 1/3. Functionally, catalyzes the activation of alpha-aminoadipate by ATP-dependent adenylation and the reduction of activated alpha-aminoadipate by NADPH. The activated alpha-aminoadipate is bound to the phosphopantheinyl group of the enzyme itself before it is reduced to (S)-2-amino-6-oxohexanoate. The protein is L-2-aminoadipate reductase large subunit (LYS2) of Candida glabrata (strain ATCC 2001 / BCRC 20586 / JCM 3761 / NBRC 0622 / NRRL Y-65 / CBS 138) (Yeast).